The sequence spans 232 residues: Enolase-phosphatase E1 (232 aa).

The protein belongs to the HAD-like hydrolase superfamily. MasA/MtnC family. In terms of assembly, monomer. Requires Mg(2+) as cofactor.

It carries out the reaction 5-methylsulfanyl-2,3-dioxopentyl phosphate + H2O = 1,2-dihydroxy-5-(methylsulfanyl)pent-1-en-3-one + phosphate. The protein operates within amino-acid biosynthesis; L-methionine biosynthesis via salvage pathway; L-methionine from S-methyl-5-thio-alpha-D-ribose 1-phosphate: step 3/6. It functions in the pathway amino-acid biosynthesis; L-methionine biosynthesis via salvage pathway; L-methionine from S-methyl-5-thio-alpha-D-ribose 1-phosphate: step 4/6. Bifunctional enzyme that catalyzes the enolization of 2,3-diketo-5-methylthiopentyl-1-phosphate (DK-MTP-1-P) into the intermediate 2-hydroxy-3-keto-5-methylthiopentenyl-1-phosphate (HK-MTPenyl-1-P), which is then dephosphorylated to form the acireductone 1,2-dihydroxy-3-keto-5-methylthiopentene (DHK-MTPene). This chain is Enolase-phosphatase E1, found in Acidiphilium cryptum (strain JF-5).